Reading from the N-terminus, the 86-residue chain is Large ribosomal subunit protein uL24c (86 aa).

Belongs to the universal ribosomal protein uL24 family. Part of the 50S ribosomal subunit.

The protein localises to the plastid. It is found in the chloroplast. Functionally, one of two assembly initiator proteins, it binds directly to the 5'-end of the 23S rRNA, where it nucleates assembly of the 50S subunit. The polypeptide is Large ribosomal subunit protein uL24c (rpl24) (Heterosigma akashiwo (strain NIES-293 / 8280G21-1)).